The following is a 146-amino-acid chain: Large ribosomal subunit protein uL11 (146 aa).

Belongs to the universal ribosomal protein uL11 family. As to quaternary structure, part of the ribosomal stalk of the 50S ribosomal subunit. Interacts with L10 and the large rRNA to form the base of the stalk. L10 forms an elongated spine to which L12 dimers bind in a sequential fashion forming a multimeric L10(L12)X complex. One or more lysine residues are methylated.

Forms part of the ribosomal stalk which helps the ribosome interact with GTP-bound translation factors. The protein is Large ribosomal subunit protein uL11 of Blochmanniella floridana.